The following is a 119-amino-acid chain: Protein TusC (119 aa).

This sequence belongs to the DsrF/TusC family. In terms of assembly, heterohexamer, formed by a dimer of trimers. The hexameric TusBCD complex contains 2 copies each of TusB, TusC and TusD. The TusBCD complex interacts with TusE.

It localises to the cytoplasm. Part of a sulfur-relay system required for 2-thiolation of 5-methylaminomethyl-2-thiouridine (mnm(5)s(2)U) at tRNA wobble positions. This Sodalis glossinidius (strain morsitans) protein is Protein TusC.